Here is a 220-residue protein sequence, read N- to C-terminus: Adenylate kinase (220 aa).

13–18 (GAGKGT) is an ATP binding site. The tract at residues 33–62 (ATGDMLRSQVARQTELGKEAKKIMDQGGLV) is NMP. AMP contacts are provided by residues Thr-34, Arg-39, 60–62 (GLV), 89–92 (GFPR), and Gln-96. The tract at residues 130–167 (GRLVHPGSGRSYHLEFNPPKVPMKDDVTGEPLIQRSDD) is LID. Residues Arg-131 and 140–141 (SY) contribute to the ATP site. Residues Arg-164 and Arg-175 each contribute to the AMP site. Gln-203 lines the ATP pocket.

Belongs to the adenylate kinase family. AK2 subfamily. As to quaternary structure, monomer.

The protein localises to the cytoplasm. Its subcellular location is the cytosol. It localises to the mitochondrion intermembrane space. It is found in the nucleus. It catalyses the reaction AMP + ATP = 2 ADP. Its function is as follows. Catalyzes the reversible transfer of the terminal phosphate group between ATP and AMP. Plays an important role in cellular energy homeostasis and in adenine nucleotide metabolism. Adenylate kinase activity is critical for regulation of the phosphate utilization and the AMP de novo biosynthesis pathways. This is Adenylate kinase (adk1) from Schizosaccharomyces pombe (strain 972 / ATCC 24843) (Fission yeast).